A 526-amino-acid chain; its full sequence is MFS-type transporter clz19 (526 aa).

The tract at residues 1-49 (MNVDTTSPQAPLAGVESKQDGASNEATAKAESTTHDQNESSSFDERPVH) is disordered. Residues 32–49 (STTHDQNESSSFDERPVH) are compositionally biased toward basic and acidic residues. N-linked (GlcNAc...) asparagine glycosylation is present at N38. The helical transmembrane segment at 59–79 (ALLAVASFAAAISPASTTTYY) threads the bilayer. A glycan (N-linked (GlcNAc...) asparagine) is linked at N97. Transmembrane regions (helical) follow at residues 126 to 143 (VYLV…GLAL), 186 to 206 (AYLT…GGLL), and 214 to 234 (AIFW…LTFF). N-linked (GlcNAc...) asparagine glycosylation is found at N238 and N253. 6 consecutive transmembrane segments (helical) span residues 294 to 314 (FIVC…ISIF), 322 to 342 (YGYS…GSIL), 384 to 404 (LTVS…YGWL), 411 to 431 (VASV…VLIA), 446 to 466 (ALGA…VAAV), and 473 to 493 (IGIG…LPAL).

This sequence belongs to the major facilitator superfamily.

It localises to the membrane. Its function is as follows. MFS-type transporter; part of the gene cluster that mediates the biosynthesis of squalestatin S1 (SQS1, also known as zaragozic acid A), a heavily oxidized fungal polyketide that offers potent cholesterol lowering activity by targeting squalene synthase (SS). In Cochliobolus lunatus (Filamentous fungus), this protein is MFS-type transporter clz19.